Consider the following 499-residue polypeptide: Hepatic triacylglycerol lipase (499 aa).

The signal sequence occupies residues 1–22 (MDTSPLCFSILLVLCIFIQSSA). Residues N42 and N78 are each glycosylated (N-linked (GlcNAc...) asparagine). Residue S168 is the Nucleophile of the active site. D194 functions as the Charge relay system in the catalytic mechanism. Residues 254-277 (CHFLELYRHIAQHGFNAITQTIKC) form an essential for determining substrate specificity region. H279 acts as the Charge relay system in catalysis. One can recognise a PLAT domain in the interval 352 to 486 (YHYQFKIQFI…RPTQEKIFVK (135 aa)). N362 and N397 each carry an N-linked (GlcNAc...) asparagine glycan.

Belongs to the AB hydrolase superfamily. Lipase family. In terms of assembly, homodimer.

It localises to the secreted. The catalysed reaction is a triacylglycerol + H2O = a diacylglycerol + a fatty acid + H(+). It carries out the reaction a 1-acyl-sn-glycero-3-phosphocholine + H2O = sn-glycerol 3-phosphocholine + a fatty acid + H(+). It catalyses the reaction a 1,2-diacyl-sn-glycero-3-phosphocholine + H2O = a 2-acyl-sn-glycero-3-phosphocholine + a fatty acid + H(+). The enzyme catalyses 1,2,3-tri-(9Z-octadecenoyl)-glycerol + H2O = di-(9Z)-octadecenoylglycerol + (9Z)-octadecenoate + H(+). The catalysed reaction is 1,2-di-(9Z-octadecenoyl)-sn-glycero-3-phosphocholine + H2O = (9Z-octadecenoyl)-sn-glycero-3-phosphocholine + (9Z)-octadecenoate + H(+). It carries out the reaction 1,2,3-tributanoylglycerol + H2O = dibutanoylglycerol + butanoate + H(+). It catalyses the reaction 1,2-dihexadecanoyl-sn-glycero-3-phosphocholine + H2O = hexadecanoyl-sn-glycero-3-phosphocholine + hexadecanoate + H(+). The enzyme catalyses 1,2-di-(9Z-octadecenoyl)-sn-glycerol + H2O = 2-(9Z-octadecenoyl)-glycerol + (9Z)-octadecenoate + H(+). The catalysed reaction is 1,2,3-tri-(9Z-octadecenoyl)-glycerol + H2O = 2,3-di-(9Z)-octadecenoyl-sn-glycerol + (9Z)-octadecenoate + H(+). It carries out the reaction 1-(9Z-octadecenoyl)-sn-glycero-3-phospho-L-serine + H2O = sn-glycero-3-phospho-L-serine + (9Z)-octadecenoate + H(+). It catalyses the reaction 1-hexadecanoyl-sn-glycero-3-phosphocholine + H2O = sn-glycerol 3-phosphocholine + hexadecanoate + H(+). The enzyme catalyses 1,3-di-(9Z-octadecenoyl)-glycerol + H2O = 3-(9Z-octadecenoyl)-sn-glycerol + (9Z)-octadecenoate + H(+). Phospholipase A1 and triacylglycerol lipase are inhibited by sphingomyelin. Catalyzes the hydrolysis of triglycerides and phospholipids present in circulating plasma lipoproteins, including chylomicrons, intermediate density lipoproteins (IDL), low density lipoproteins (LDL) of large size and high density lipoproteins (HDL), releasing free fatty acids (FFA) and smaller lipoprotein particles. Also exhibits lysophospholipase activity. Can hydrolyze both neutral lipid and phospholipid substrates but shows a greater binding affinity for neutral lipid substrates than phospholipid substrates. In native LDL, preferentially hydrolyzes the phosphatidylcholine species containing polyunsaturated fatty acids at sn-2 position. This chain is Hepatic triacylglycerol lipase (LIPC), found in Homo sapiens (Human).